We begin with the raw amino-acid sequence, 299 residues long: Oxygen-dependent coproporphyrinogen-III oxidase (299 aa).

Ser-92 serves as a coordination point for substrate. The Mn(2+) site is built by His-96 and His-106. His-106 serves as the catalytic Proton donor. Substrate is bound at residue 108–110; that stretch reads NVR. His-145 and His-175 together coordinate Mn(2+). The tract at residues 240–275 is important for dimerization; sequence YVEFNLVWDRGTLFGLQTGGRTESILMSMPPLVRWE. 258-260 contacts substrate; the sequence is GGR.

This sequence belongs to the aerobic coproporphyrinogen-III oxidase family. In terms of assembly, homodimer. Requires Mn(2+) as cofactor.

It is found in the cytoplasm. The catalysed reaction is coproporphyrinogen III + O2 + 2 H(+) = protoporphyrinogen IX + 2 CO2 + 2 H2O. The protein operates within porphyrin-containing compound metabolism; protoporphyrin-IX biosynthesis; protoporphyrinogen-IX from coproporphyrinogen-III (O2 route): step 1/1. Its function is as follows. Involved in the heme biosynthesis. Catalyzes the aerobic oxidative decarboxylation of propionate groups of rings A and B of coproporphyrinogen-III to yield the vinyl groups in protoporphyrinogen-IX. The sequence is that of Oxygen-dependent coproporphyrinogen-III oxidase from Escherichia coli (strain SMS-3-5 / SECEC).